Reading from the N-terminus, the 752-residue chain is Probable GTP-binding protein OBGC1, chloroplastic (752 aa).

Residues 1–90 (MAPAVAVVAA…RFPTANPEPR (90 aa)) constitute a chloroplast transit peptide. The segment at 19-121 (FSAEARRNTK…EEDEVELGLR (103 aa)) is disordered. Residues 26–36 (NTKGSRSKRGS) are compositionally biased toward basic residues. A compositionally biased stretch (acidic residues) spans 103–117 (GDDEEDEEEEEDEVE). In terms of domain architecture, Obg spans 294 to 452 (MRCFDTAKIY…MWIDLELKLV (159 aa)). The OBG-type G domain maps to 453-621 (ADVGIVGAPN…VVLAAYKVLQ (169 aa)). GTP-binding positions include 459-466 (GAPNAGKS), 484-488 (FTTLL), 506-509 (DLPG), 573-576 (NKMD), and 602-604 (SAM). Mg(2+) contacts are provided by S466 and T486. The OCT domain maps to 649–728 (ERRAPMNEFE…VGEMEMVWTD (80 aa)). Positions 728 to 752 (DEPSKTRSSKTMNSKDDSVRWPEFG) are disordered. Over residues 740–752 (NSKDDSVRWPEFG) the composition is skewed to basic and acidic residues.

This sequence belongs to the TRAFAC class OBG-HflX-like GTPase superfamily. OBG GTPase family. It depends on Mg(2+) as a cofactor.

The protein resides in the plastid. It is found in the chloroplast. Probable GTP-binding protein that may play a role in chloroplast development. This chain is Probable GTP-binding protein OBGC1, chloroplastic (OBGC1), found in Oryza sativa subsp. indica (Rice).